We begin with the raw amino-acid sequence, 504 residues long: Lysine--tRNA ligase (504 aa).

The Mg(2+) site is built by Glu414 and Glu421.

Belongs to the class-II aminoacyl-tRNA synthetase family. Homodimer. Requires Mg(2+) as cofactor.

It localises to the cytoplasm. The catalysed reaction is tRNA(Lys) + L-lysine + ATP = L-lysyl-tRNA(Lys) + AMP + diphosphate. This chain is Lysine--tRNA ligase, found in Photorhabdus laumondii subsp. laumondii (strain DSM 15139 / CIP 105565 / TT01) (Photorhabdus luminescens subsp. laumondii).